Consider the following 147-residue polypeptide: Hemoglobin subunit gamma (147 aa).

In terms of domain architecture, Globin spans 3-147 (HFTVEEKAVI…VAIALAHKYH (145 aa)). H64 and H93 together coordinate heme b.

It belongs to the globin family. In terms of assembly, heterotetramer of two alpha chains and two gamma chains in fetal hemoglobin (Hb F). As to expression, red blood cells.

Functionally, gamma chains make up the fetal hemoglobin F, in combination with alpha chains. This chain is Hemoglobin subunit gamma (HBG), found in Cheirogaleus medius (Fat-tailed dwarf lemur).